Reading from the N-terminus, the 162-residue chain is Large ribosomal subunit protein uL15 (162 aa).

The segment covering 1-13 (MKLNEIRDNEGAT) has biased composition (basic and acidic residues). The tract at residues 1–37 (MKLNEIRDNEGATKNRMRVGRGIGSGKGKTAGRGVKG) is disordered. The span at 21-35 (RGIGSGKGKTAGRGV) shows a compositional bias: gly residues.

It belongs to the universal ribosomal protein uL15 family. In terms of assembly, part of the 50S ribosomal subunit.

In terms of biological role, binds to the 23S rRNA. In Methylobacterium nodulans (strain LMG 21967 / CNCM I-2342 / ORS 2060), this protein is Large ribosomal subunit protein uL15.